Reading from the N-terminus, the 142-residue chain is Ribosome-binding factor A (142 aa).

Belongs to the RbfA family. As to quaternary structure, monomer. Binds 30S ribosomal subunits, but not 50S ribosomal subunits or 70S ribosomes.

It is found in the cytoplasm. Functionally, one of several proteins that assist in the late maturation steps of the functional core of the 30S ribosomal subunit. Associates with free 30S ribosomal subunits (but not with 30S subunits that are part of 70S ribosomes or polysomes). Required for efficient processing of 16S rRNA. May interact with the 5'-terminal helix region of 16S rRNA. This Leifsonia xyli subsp. xyli (strain CTCB07) protein is Ribosome-binding factor A.